The following is a 603-amino-acid chain: MSEIEKKLATLSNGPGVYLMKDESGEIIYVGKARSLKKRVSSYFLEKPNRDLKTGILVKKIASFDAILVTTEKEALILEANLIRKHKPRYNILLKDGKRFPSLRIDVRTSYPRLEVVRKVKKDGAIYFGPFSSAGKLRSTLKIINKTFQLRKCKQKEPPKRNRPCLNYQMGQCLGPCCLPVDRDEYLDMVNEVILFLKGRTNDLLQKIKEQMAAASERQEYELAARLRDRMFAIQATVEKQAAVTTDFVDRDVIGIDREPEGSAISVLYIRGGFLLGSRNYNFDEVLGTDSESIQAFLRQYYDKDRFIPDEVFVPCQLENMELMEQWLTETAEKRVVLHWPQRGEKTRLIEMANENAHEALKDRISSENVFKSLLERLQKRLRMDRPPRRIECFDISHTGGNQTVASMIVFEDGKEAKSEYRTFNIDSLDHPDDYAAMHEVMARRFSPDKDWPTPDVLLIDGGKGQLSITASVLDGLGVMGAFEVISIAKKDEAKKETMDKIYRPGQANPVVFGRDGDVLLFLQRVRDEAHRFAITTHRKKRAKTIRKSALDSVPGIGEKRKKALLRHFGSIKRLKEASPEDIAQVPGISVKRAQEILEALDA.

One can recognise a GIY-YIG domain in the interval 13–92; it reads NGPGVYLMKD…IRKHKPRYNI (80 aa). Positions 202-237 constitute a UVR domain; that stretch reads NDLLQKIKEQMAAASERQEYELAARLRDRMFAIQAT.

It belongs to the UvrC family. Interacts with UvrB in an incision complex.

The protein resides in the cytoplasm. Functionally, the UvrABC repair system catalyzes the recognition and processing of DNA lesions. UvrC both incises the 5' and 3' sides of the lesion. The N-terminal half is responsible for the 3' incision and the C-terminal half is responsible for the 5' incision. The chain is UvrABC system protein C from Desulfatibacillum aliphaticivorans.